A 148-amino-acid polypeptide reads, in one-letter code: Large ribosomal subunit protein bL9 (148 aa).

Belongs to the bacterial ribosomal protein bL9 family.

Functionally, binds to the 23S rRNA. The protein is Large ribosomal subunit protein bL9 of Heliobacterium modesticaldum (strain ATCC 51547 / Ice1).